Reading from the N-terminus, the 288-residue chain is Thymidylate synthase (288 aa).

Arg21 contacts dUMP. Residue Asn51 participates in (6R)-5,10-methylene-5,6,7,8-tetrahydrofolate binding. 150–151 (RR) serves as a coordination point for dUMP. Residue Cys170 is the Nucleophile of the active site. DUMP is bound by residues 190-193 (RSGD), Asn201, and 231-233 (HIY). Asp193 provides a ligand contact to (6R)-5,10-methylene-5,6,7,8-tetrahydrofolate. Ala287 is a binding site for (6R)-5,10-methylene-5,6,7,8-tetrahydrofolate.

The protein belongs to the thymidylate synthase family. Bacterial-type ThyA subfamily. As to quaternary structure, homodimer.

The protein localises to the cytoplasm. It carries out the reaction dUMP + (6R)-5,10-methylene-5,6,7,8-tetrahydrofolate = 7,8-dihydrofolate + dTMP. The protein operates within pyrimidine metabolism; dTTP biosynthesis. Catalyzes the reductive methylation of 2'-deoxyuridine-5'-monophosphate (dUMP) to 2'-deoxythymidine-5'-monophosphate (dTMP) while utilizing 5,10-methylenetetrahydrofolate (mTHF) as the methyl donor and reductant in the reaction, yielding dihydrofolate (DHF) as a by-product. This enzymatic reaction provides an intracellular de novo source of dTMP, an essential precursor for DNA biosynthesis. In Aster yellows witches'-broom phytoplasma (strain AYWB), this protein is Thymidylate synthase.